The sequence spans 592 residues: Calnexin (592 aa).

The N-terminal stretch at 1–20 (MEGKWLLCMLLVLGTAIVEA) is a signal peptide. Residues 21–481 (HDGHDDDVID…QMIEAAEERP (461 aa)) lie on the Lumenal side of the membrane. Ca(2+) contacts are provided by serine 74 and aspartate 117. Lysine 137 carries the post-translational modification N6-acetyllysine. A disulfide bridge links cysteine 160 with cysteine 194. The an alpha-D-glucoside site is built by tyrosine 164, lysine 166, tyrosine 185, and aspartate 192. Residues 260 to 345 (GNLLNDMTPP…AEKPEDWDED (86 aa)) are disordered. Positions 274 to 319 (REIEDPEDRKPEDWDERPKIPDPEAVKPDDWDEDAPAKIPDEEATK) are enriched in basic and acidic residues. The p domain (Extended arm) stretch occupies residues 276 to 409 (IEDPEDRKPE…RKIPNPDFFE (134 aa)). A run of 5 repeats spans residues 278-290 (DPEDRKPEDWDER), 295-307 (DPEAVKPDDWDED), 314-326 (DEEATKPEGWLDD), 333-345 (DPDAEKPEDWDED), and 348-358 (GEWEAPQIANP). 2 4 X approximate repeats regions span residues 278-345 (DPED…WDED) and 348-405 (GEWE…IPNP). Acidic residues predominate over residues 323–345 (WLDDEPEYVPDPDAEKPEDWDED). The interval 326–359 (DEPEYVPDPDAEKPEDWDEDMDGEWEAPQIANPR) is interaction with PPIB. A disulfide bond links cysteine 360 and cysteine 366. A run of 3 repeats spans residues 367–377 (GVWQRPVIDNP), 381–391 (GKWKPPMIDNP), and 395–405 (GIWKPRKIPNP). Glutamate 425 is an an alpha-D-glucoside binding site. Position 436 (aspartate 436) interacts with Ca(2+). A helical membrane pass occupies residues 482-502 (WLWVVYILTVALPVFLVILFC). Residues cysteine 502 and cysteine 503 are each lipidated (S-palmitoyl cysteine). The Cytoplasmic segment spans residues 503-592 (CSGKKQTSGM…SPRNRKPRRE (90 aa)). A sufficient to mediate interaction with SGIP1 region spans residues 503–592 (CSGKKQTSGM…SPRNRKPRRE (90 aa)). Residues 511 to 592 (GMEYKKTDAP…SPRNRKPRRE (82 aa)) form a disordered region. The segment covering 525-547 (KEEEEEKEEEKDKGDEEEEGEEK) has biased composition (acidic residues). Phosphoserine is present on serine 554. Threonine 562 carries the phosphothreonine modification. The residue at position 564 (serine 564) is a Phosphoserine; by MAPK3. At serine 583 the chain carries Phosphoserine.

The protein belongs to the calreticulin family. In terms of assembly, interacts with MAPK3/ERK1. Interacts with KCNH2. Associates with ribosomes. Interacts with SGIP1; involved in negative regulation of endocytosis. The palmitoylated form interacts with the ribosome-translocon complex component SSR1, promoting efficient folding of glycoproteins. Interacts with SERPINA2P/SERPINA2 and with the S and Z variants of SERPINA1. Interacts with PPIB. Interacts with ZNRF4. Interacts with SMIM22. Interacts with TMX2. Interacts with TMEM35A/NACHO. Interacts with CHRNA7. Interacts with reticulophagy regulators RETREG2 and RETREG3. Interacts with DNM1L; may form part of a larger protein complex at the ER-mitochondrial interface during mitochondrial fission. Interacts with ADAM7. As to quaternary structure, (Microbial infection) Interacts with HBV large envelope protein, isoform L. (Microbial infection) Interacts with HBV large envelope protein, isoform M; this association may be essential for isoform M proper secretion. In terms of processing, phosphorylated at Ser-564 by MAPK3/ERK1. Phosphorylation by MAPK3/ERK1 increases its association with ribosomes. Post-translationally, palmitoylation by DHHC6 leads to the preferential localization to the perinuclear rough ER. It mediates the association of calnexin with the ribosome-translocon complex (RTC) which is required for efficient folding of glycosylated proteins. Ubiquitinated, leading to proteasomal degradation. Probably ubiquitinated by ZNRF4.

The protein localises to the endoplasmic reticulum membrane. It localises to the mitochondrion membrane. Its subcellular location is the melanosome membrane. Functionally, calcium-binding protein that interacts with newly synthesized monoglucosylated glycoproteins in the endoplasmic reticulum. It may act in assisting protein assembly and/or in the retention within the ER of unassembled protein subunits. It seems to play a major role in the quality control apparatus of the ER by the retention of incorrectly folded proteins. Associated with partial T-cell antigen receptor complexes that escape the ER of immature thymocytes, it may function as a signaling complex regulating thymocyte maturation. Additionally it may play a role in receptor-mediated endocytosis at the synapse. This is Calnexin (CANX) from Homo sapiens (Human).